Reading from the N-terminus, the 561-residue chain is Putative transport protein YbjL (561 aa).

5 consecutive transmembrane segments (helical) span residues 8-28, 32-52, 66-86, 94-114, and 158-178; these read LLNGNYILLLFVVLALGLCLG, LGSVQLGNSIGVLVVSLLLGQ, FMLFIFCVGVEAGPNFFSIFF, MLALVMVGSALLIALGLGKLF, and NLSLGYALTYLIGLVSLIVGA. RCK C-terminal domains follow at residues 200 to 288 and 292 to 373; these read RGLD…SFRN and VFDR…RIGF. Transmembrane regions (helical) follow at residues 383-403, 406-426, 447-467, 475-495, and 540-560; these read LLAFCAFFIIGLMIGMITFQF, FSFGIGNAAGLLFAGIMLGFL, FGLMVFMAGVGLSAGSGISNG, MLIAGLVVSLVPVVICFLFGA, and AIANVLLTLAGTLIVIIWPGL.

Belongs to the AAE transporter (TC 2.A.81) family. YbjL subfamily.

Its subcellular location is the cell membrane. This is Putative transport protein YbjL from Salmonella dublin (strain CT_02021853).